The following is a 1402-amino-acid chain: DNA-directed RNA polymerase subunit beta' (1402 aa).

Residues cysteine 71, cysteine 73, cysteine 86, and cysteine 89 each coordinate Zn(2+). Mg(2+)-binding residues include aspartate 462, aspartate 464, and aspartate 466. Positions 811, 885, 892, and 895 each coordinate Zn(2+).

The protein belongs to the RNA polymerase beta' chain family. The RNAP catalytic core consists of 2 alpha, 1 beta, 1 beta' and 1 omega subunit. When a sigma factor is associated with the core the holoenzyme is formed, which can initiate transcription. It depends on Mg(2+) as a cofactor. Zn(2+) is required as a cofactor.

The catalysed reaction is RNA(n) + a ribonucleoside 5'-triphosphate = RNA(n+1) + diphosphate. Functionally, DNA-dependent RNA polymerase catalyzes the transcription of DNA into RNA using the four ribonucleoside triphosphates as substrates. The chain is DNA-directed RNA polymerase subunit beta' from Bartonella henselae (strain ATCC 49882 / DSM 28221 / CCUG 30454 / Houston 1) (Rochalimaea henselae).